Consider the following 197-residue polypeptide: Recombination protein RecR (197 aa).

The C4-type zinc finger occupies 55–70 (CVQCRDFTESEICTIC). The Toprim domain occupies 78–173 (QQLCVVESPA…RPSRLAQGMP (96 aa)).

This sequence belongs to the RecR family.

Its function is as follows. May play a role in DNA repair. It seems to be involved in an RecBC-independent recombinational process of DNA repair. It may act with RecF and RecO. The sequence is that of Recombination protein RecR from Xanthomonas euvesicatoria pv. vesicatoria (strain 85-10) (Xanthomonas campestris pv. vesicatoria).